Consider the following 281-residue polypeptide: Aliphatic sulfonates import ATP-binding protein SsuB (281 aa).

One can recognise an ABC transporter domain in the interval 40-263 (LTLRNLRKSF…RRGSADLAAL (224 aa)). 72–79 (GRSGCGKS) is an ATP binding site.

It belongs to the ABC transporter superfamily. Aliphatic sulfonates importer (TC 3.A.1.17.2) family. The complex is composed of two ATP-binding proteins (SsuB), two transmembrane proteins (SsuC) and a solute-binding protein (SsuA).

The protein resides in the cell inner membrane. It catalyses the reaction ATP + H2O + aliphatic sulfonate-[sulfonate-binding protein]Side 1 = ADP + phosphate + aliphatic sulfonateSide 2 + [sulfonate-binding protein]Side 1.. Functionally, part of the ABC transporter complex SsuABC involved in aliphatic sulfonates import. Responsible for energy coupling to the transport system. The sequence is that of Aliphatic sulfonates import ATP-binding protein SsuB from Rhodopseudomonas palustris (strain BisA53).